The primary structure comprises 302 residues: Ribosomal RNA small subunit methyltransferase H (302 aa).

S-adenosyl-L-methionine-binding positions include 34 to 36, aspartate 53, phenylalanine 80, aspartate 101, and glutamine 108; that span reads AGH. A disordered region spans residues 283-302; the sequence is LEENPRSKSAKMRVLKKIER. Residues 290–302 are compositionally biased toward basic residues; the sequence is KSAKMRVLKKIER.

The protein belongs to the methyltransferase superfamily. RsmH family.

It localises to the cytoplasm. The enzyme catalyses cytidine(1402) in 16S rRNA + S-adenosyl-L-methionine = N(4)-methylcytidine(1402) in 16S rRNA + S-adenosyl-L-homocysteine + H(+). Functionally, specifically methylates the N4 position of cytidine in position 1402 (C1402) of 16S rRNA. In Mycoplasma mobile (strain ATCC 43663 / 163K / NCTC 11711) (Mesomycoplasma mobile), this protein is Ribosomal RNA small subunit methyltransferase H.